The following is a 161-amino-acid chain: F-box only protein 48 (161 aa).

The disordered stretch occupies residues 1–25 (MKKTSKKNNNFKIPGTELNSADAER). An F-box domain is found at 32-79 (RNFVELLPLEVTYKIFSQLDIQSLCRASRTCTGWNCAIRNNDSLWKPH).

This Mus musculus (Mouse) protein is F-box only protein 48 (Fbxo48).